Reading from the N-terminus, the 1109-residue chain is ABC transporter G family member 28 (1109 aa).

2 consecutive transmembrane segments (helical) span residues asparagine 5–glutamine 25 and asparagine 291–tyrosine 311. The segment at glutamine 325 to lysine 411 is disordered. Positions serine 339 to threonine 357 are enriched in basic and acidic residues. One can recognise an ABC transporter domain in the interval valine 499–glutamate 741. An ATP-binding site is contributed by glycine 533–threonine 540. One can recognise an ABC transmembrane type-2 domain in the interval glutamine 859–alanine 1056. 6 helical membrane passes run leucine 879 to valine 899, phenylalanine 904 to alanine 924, threonine 954 to phenylalanine 974, valine 986 to phenylalanine 1006, proline 1008 to serine 1028, and cysteine 1084 to valine 1104.

The protein belongs to the ABC transporter superfamily. ABCG family. Eye pigment precursor importer (TC 3.A.1.204) subfamily.

It is found in the membrane. The sequence is that of ABC transporter G family member 28 (ABCG28) from Arabidopsis thaliana (Mouse-ear cress).